The primary structure comprises 302 residues: MQVSIVNEHKYRELEPLNEMLVKRGGVKMIPEPKFVISGLVDNEEYVIKLRIDLADEFRYSYQNQQWTPFAPSTKNSKLSAITETEHRKETGATWNMRIVQFDKLLITREFNDIQRNVIHVEPNHKYIPVLTIQNVTTGKSTEFQFQQMEFIAVKSYQSARIRHTKRAPRKMNLAPGSSQKPQLIVPDILHSPTYGFTAAPPPFPFEYWLLYPQIQYQIQQLAYSLPMGPPMVPIHHIQCTEASQRVYAPEYGWNSILMPGAHKEQDDHYMFHHEIWAPQDHELEKLHVLTEQKNKPSETPQ.

Positions 5–180 (IVNEHKYREL…KMNLAPGSSQ (176 aa)) form a DNA-binding region, T-box.

It localises to the nucleus. The protein is Putative T-box protein 34 (tbx-34) of Caenorhabditis elegans.